A 396-amino-acid polypeptide reads, in one-letter code: Aspartate aminotransferase (396 aa).

Residues Gly34, Trp130, and Asn183 each contribute to the L-aspartate site. Lys246 is subject to N6-(pyridoxal phosphate)lysine. Arg374 lines the L-aspartate pocket.

This sequence belongs to the class-I pyridoxal-phosphate-dependent aminotransferase family. As to quaternary structure, homodimer. Requires pyridoxal 5'-phosphate as cofactor.

It is found in the cytoplasm. The enzyme catalyses L-aspartate + 2-oxoglutarate = oxaloacetate + L-glutamate. In Haemophilus influenzae (strain ATCC 51907 / DSM 11121 / KW20 / Rd), this protein is Aspartate aminotransferase (aspC).